Here is a 178-residue protein sequence, read N- to C-terminus: Probable inosine/xanthosine triphosphatase (178 aa).

It belongs to the YjjX NTPase family. In terms of assembly, homodimer. Requires Mg(2+) as cofactor. Mn(2+) is required as a cofactor.

It catalyses the reaction XTP + H2O = XDP + phosphate + H(+). It carries out the reaction ITP + H2O = IDP + phosphate + H(+). Phosphatase that hydrolyzes non-canonical purine nucleotides such as XTP and ITP to their respective diphosphate derivatives. Probably excludes non-canonical purines from DNA/RNA precursor pool, thus preventing their incorporation into DNA/RNA and avoiding chromosomal lesions. This Pyrobaculum aerophilum (strain ATCC 51768 / DSM 7523 / JCM 9630 / CIP 104966 / NBRC 100827 / IM2) protein is Probable inosine/xanthosine triphosphatase.